Here is a 434-residue protein sequence, read N- to C-terminus: Maintenance of mitochondrial morphology protein 1 (434 aa).

Residues 1-105 are Lumenal-facing; the sequence is MEMSELLASE…SFSSQSFAEG (105 aa). Residues 106 to 126 traverse the membrane as a helical segment; that stretch reads LIVGQLSVIVALIFVIKFFVF. Topologically, residues 127–434 are cytoplasmic; it reads SEGGTKTATA…DDSVSVKSND (308 aa). The region spanning 194–408 is the SMP-LTD domain; it reads SPESLDWFNV…EPRFQFVKLP (215 aa). The interval 415–434 is disordered; sequence KNTRKEKTDTDDSVSVKSND.

The protein belongs to the MMM1 family. In terms of assembly, homodimer. Component of the ER-mitochondria encounter structure (ERMES) or MDM complex, composed of MMM1, MDM10, MDM12 and MDM34. An MMM1 homodimer associates with one molecule of MDM12 on each side in a pairwise head-to-tail manner, and the SMP-LTD domains of MMM1 and MDM12 generate a continuous hydrophobic tunnel for phospholipid trafficking.

The protein localises to the endoplasmic reticulum membrane. Functionally, component of the ERMES/MDM complex, which serves as a molecular tether to connect the endoplasmic reticulum (ER) and mitochondria. Components of this complex are involved in the control of mitochondrial shape and protein biogenesis, and function in nonvesicular lipid trafficking between the ER and mitochondria. The MDM12-MMM1 subcomplex functions in the major beta-barrel assembly pathway that is responsible for biogenesis of all outer membrane beta-barrel proteins, and acts in a late step after the SAM complex. The MDM10-MDM12-MMM1 subcomplex further acts in the TOM40-specific pathway after the action of the MDM12-MMM1 complex. Essential for establishing and maintaining the structure of mitochondria and maintenance of mtDNA nucleoids. This Kluyveromyces lactis (strain ATCC 8585 / CBS 2359 / DSM 70799 / NBRC 1267 / NRRL Y-1140 / WM37) (Yeast) protein is Maintenance of mitochondrial morphology protein 1.